Reading from the N-terminus, the 107-residue chain is Large ribosomal subunit protein uL18c (107 aa).

The protein belongs to the universal ribosomal protein uL18 family. Part of the 50S ribosomal subunit; contacts the 5S rRNA.

It localises to the plastid. The protein resides in the chloroplast. Its function is as follows. Binds 5S rRNA, forms part of the central protuberance of the 50S subunit. This is Large ribosomal subunit protein uL18c (rpl18) from Guillardia theta (Cryptophyte).